Here is a 197-residue protein sequence, read N- to C-terminus: Phosphoheptose isomerase (197 aa).

The SIS domain maps to methionine 36–glutamate 197. Position 51–53 (asparagine 51–glycine 53) interacts with substrate. 2 residues coordinate Zn(2+): histidine 60 and glutamate 64. Residues glutamate 64, asparagine 93–aspartate 94, serine 119–serine 121, serine 124, and glutamine 174 contribute to the substrate site. The Zn(2+) site is built by glutamine 174 and histidine 182.

The protein belongs to the SIS family. GmhA subfamily. Homotetramer. Zn(2+) is required as a cofactor.

It is found in the cytoplasm. It carries out the reaction 2 D-sedoheptulose 7-phosphate = D-glycero-alpha-D-manno-heptose 7-phosphate + D-glycero-beta-D-manno-heptose 7-phosphate. It participates in carbohydrate biosynthesis; D-glycero-D-manno-heptose 7-phosphate biosynthesis; D-glycero-alpha-D-manno-heptose 7-phosphate and D-glycero-beta-D-manno-heptose 7-phosphate from sedoheptulose 7-phosphate: step 1/1. Catalyzes the isomerization of sedoheptulose 7-phosphate in D-glycero-D-manno-heptose 7-phosphate. This chain is Phosphoheptose isomerase, found in Pseudomonas fluorescens (strain Pf0-1).